A 331-amino-acid chain; its full sequence is Osmotic avoidance abnormal protein 8 (331 aa).

Residues 1 to 21 (MPAKMLKWLLIHIFLIHSIFC) form the signal peptide.

In terms of tissue distribution, expressed in the hypodermal syncitium but not in hypodermal seam cells.

It localises to the secreted. Functionally, negative regulator of the osmotic stress response. Acts via the transmembrane protein ptr-23. This Caenorhabditis elegans protein is Osmotic avoidance abnormal protein 8 (osm-8).